Consider the following 165-residue polypeptide: Peptide deformylase (165 aa).

Fe cation is bound by residues C93 and H135. Residue E136 is part of the active site. Residue H139 coordinates Fe cation.

The protein belongs to the polypeptide deformylase family. The cofactor is Fe(2+).

The catalysed reaction is N-terminal N-formyl-L-methionyl-[peptide] + H2O = N-terminal L-methionyl-[peptide] + formate. Removes the formyl group from the N-terminal Met of newly synthesized proteins. Requires at least a dipeptide for an efficient rate of reaction. N-terminal L-methionine is a prerequisite for activity but the enzyme has broad specificity at other positions. The protein is Peptide deformylase of Thermodesulfovibrio yellowstonii (strain ATCC 51303 / DSM 11347 / YP87).